The sequence spans 968 residues: Protein translocase subunit SecA (968 aa).

Residues glutamine 99, glycine 117–threonine 121, and aspartate 631 each bind ATP.

The protein belongs to the SecA family. In terms of assembly, monomer and homodimer. Part of the essential Sec protein translocation apparatus which comprises SecA, SecYEG and auxiliary proteins SecDF. Other proteins may also be involved.

The protein resides in the cell inner membrane. The protein localises to the cytoplasm. The enzyme catalyses ATP + H2O + cellular proteinSide 1 = ADP + phosphate + cellular proteinSide 2.. Part of the Sec protein translocase complex. Interacts with the SecYEG preprotein conducting channel. Has a central role in coupling the hydrolysis of ATP to the transfer of proteins into and across the cell membrane, serving as an ATP-driven molecular motor driving the stepwise translocation of polypeptide chains across the membrane. The chain is Protein translocase subunit SecA from Chlamydia muridarum (strain MoPn / Nigg).